A 394-amino-acid polypeptide reads, in one-letter code: 1-deoxy-D-xylulose 5-phosphate reductoisomerase (394 aa).

NADPH-binding residues include Thr12, Gly13, Ser14, Ile15, Lys39, Gln40, and Asn126. Lys127 lines the 1-deoxy-D-xylulose 5-phosphate pocket. Residue Glu128 coordinates NADPH. A Mn(2+)-binding site is contributed by Asp152. 1-deoxy-D-xylulose 5-phosphate contacts are provided by Ser153, Glu154, Ser183, and His206. Residue Glu154 participates in Mn(2+) binding. Gly212 provides a ligand contact to NADPH. 1-deoxy-D-xylulose 5-phosphate is bound by residues Ser219, Asn224, Lys225, and Glu228. Glu228 is a Mn(2+) binding site.

The protein belongs to the DXR family. Mg(2+) is required as a cofactor. Requires Mn(2+) as cofactor.

It catalyses the reaction 2-C-methyl-D-erythritol 4-phosphate + NADP(+) = 1-deoxy-D-xylulose 5-phosphate + NADPH + H(+). The protein operates within isoprenoid biosynthesis; isopentenyl diphosphate biosynthesis via DXP pathway; isopentenyl diphosphate from 1-deoxy-D-xylulose 5-phosphate: step 1/6. Its function is as follows. Catalyzes the NADPH-dependent rearrangement and reduction of 1-deoxy-D-xylulose-5-phosphate (DXP) to 2-C-methyl-D-erythritol 4-phosphate (MEP). The polypeptide is 1-deoxy-D-xylulose 5-phosphate reductoisomerase (Neisseria meningitidis serogroup A / serotype 4A (strain DSM 15465 / Z2491)).